Reading from the N-terminus, the 377-residue chain is Histone deacetylase 8 (377 aa).

The tract at residues 14-324 is histone deacetylase; it reads LPPVYIYSPE…WTYLTGVILG (311 aa). Ser39 is subject to Phosphoserine. Asp101 contributes to the substrate binding site. Residue His143 is the Proton acceptor of the active site. Residue Gly151 coordinates substrate. The a divalent metal cation site is built by Asp178, His180, and Asp267. Tyr306 contacts substrate.

It belongs to the histone deacetylase family. HD type 1 subfamily. In terms of assembly, interacts with CBFA2T3. Interacts with phosphorylated SMG5/EST1B; this interaction protects SMG5 from ubiquitin-mediated degradation. Associates with alpha-SMA (smooth muscle alpha-actin). Requires a divalent metal cation as cofactor. In terms of processing, phosphorylated by PKA on serine 39. Phosphorylation reduces deacetylase activity observed preferentially on histones H3 and H4.

It localises to the nucleus. Its subcellular location is the chromosome. It is found in the cytoplasm. It carries out the reaction N(6)-acetyl-L-lysyl-[histone] + H2O = L-lysyl-[histone] + acetate. The catalysed reaction is N(6)-acetyl-L-lysyl-[protein] + H2O = L-lysyl-[protein] + acetate. The enzyme catalyses N(6)-(2E)-butenoyl-L-lysyl-[protein] + H2O = (2E)-2-butenoate + L-lysyl-[protein]. With respect to regulation, its activity is inhibited by trichostatin A (TSA) and butyrate, 2 well known histone deacetylase inhibitors. histone deacetylase inhibitor. Functionally, histone deacetylase that catalyzes the deacetylation of lysine residues on the N-terminal part of the core histones (H2A, H2B, H3 and H4). Histone deacetylation gives a tag for epigenetic repression and plays an important role in transcriptional regulation, cell cycle progression and developmental events. Histone deacetylases act via the formation of large multiprotein complexes. Also involved in the deacetylation of cohesin complex protein SMC3 regulating release of cohesin complexes from chromatin. May play a role in smooth muscle cell contractility. In addition to protein deacetylase activity, also has protein-lysine deacylase activity: acts as a protein decrotonylase by mediating decrotonylation ((2E)-butenoyl) of histones. This is Histone deacetylase 8 (Hdac8) from Mus musculus (Mouse).